A 205-amino-acid polypeptide reads, in one-letter code: MTPPERLFLPRVCGTTLHLLLLGLLLVLLPGAQGLPGVGLTPSAAQTARQHPKMHLAHSTLKPAAHLIGDPSKQNSLLWRANTDRAFLQDGFSLSNNSLLVPTSGIYFVYSQVVFSGKAYSPKATSSPLYLAHEVQLFSSQYPFHVPLLSSQKMVYPGLQEPWLHSMYHGAAFQLTQGDQLSTHTDGIPHLVLSPSTVFFGAFAL.

The first 34 residues, 1–34, serve as a signal peptide directing secretion; the sequence is MTPPERLFLPRVCGTTLHLLLLGLLLVLLPGAQG. A glycan (O-linked (GalNAc...) threonine; partial) is linked at Thr41. One can recognise a THD domain in the interval 63 to 205; it reads PAAHLIGDPS…STVFFGAFAL (143 aa). N-linked (GlcNAc...) asparagine glycosylation is present at Asn96.

It belongs to the tumor necrosis factor family. As to quaternary structure, homotrimer, and heterotrimer of either two LTB and one LTA subunits or (less prevalent) two LTA and one LTB subunits. Interacts with TNFRSF14.

Its subcellular location is the secreted. The protein localises to the membrane. Its function is as follows. Cytokine that in its homotrimeric form binds to TNFRSF1A/TNFR1, TNFRSF1B/TNFBR and TNFRSF14/HVEM. In its heterotrimeric form with LTB binds to TNFRSF3/LTBR. Lymphotoxin is produced by lymphocytes and is cytotoxic for a wide range of tumor cells in vitro and in vivo. The sequence is that of Lymphotoxin-alpha (LTA) from Homo sapiens (Human).